Consider the following 256-residue polypeptide: UPF0246 protein Sde_3824 (256 aa).

It belongs to the UPF0246 family.

This chain is UPF0246 protein Sde_3824, found in Saccharophagus degradans (strain 2-40 / ATCC 43961 / DSM 17024).